An 849-amino-acid polypeptide reads, in one-letter code: MAP7 domain-containing protein 1 (849 aa).

Disordered stretches follow at residues 1-151 (MESG…REER) and 186-210 (EQRL…EKNK). Over residues 24 to 41 (EPRPSPEGDPSPPPPPTP) the composition is skewed to pro residues. Phosphothreonine occurs at positions 49 and 53. Residues S72 and S95 each carry the phosphoserine modification. T99 is modified (phosphothreonine). A phosphoserine mark is found at S115 and S118. The residue at position 120 (T120) is a Phosphothreonine. 2 positions are modified to phosphoserine: S125 and S127. Basic and acidic residues predominate over residues 132–151 (QDVKKAGERHKLAKERREER). Positions 167–223 (EKAKALREKQLQERRRRLEEQRLKAEQRRAALEERQRQKLEKNKERYEAAIQRSVKK) form a coiled coil. 5 positions are modified to phosphoserine: S256, S275, S315, S368, and S401. Residues 318–815 (TLPRNGRDQG…GFPAKGTAGD (498 aa)) are disordered. Residues 407-437 (RRLEATPVQKKEKKDKERENEKEKSALARER) are compositionally biased toward basic and acidic residues. A phosphoserine mark is found at S444, S448, S454, and S460. Residues 457-474 (AELSTKSKARPTSPSTTW) show a composition bias toward polar residues. A Glycyl lysine isopeptide (Lys-Gly) (interchain with G-Cter in SUMO2) cross-link involves residue K462. Phosphoserine occurs at positions 479 and 496. The span at 479–497 (SPCPSPGPGHTLPPKPPSP) shows a compositional bias: pro residues. Over residues 523–539 (PEDKNHSKSRTAEEKEP) the composition is skewed to basic and acidic residues. A compositionally biased stretch (pro residues) spans 542–556 (PASPAPSPVPSPTPA). Residues S544, S548, and S552 each carry the phosphoserine modification. A Phosphothreonine modification is found at T554. Residues 568–582 (PPDTAVPAVPTVPTF) are compositionally biased toward low complexity. Positions 602–724 (TTDREEATRL…QERRKRLEEI (123 aa)) form a coiled coil. Basic and acidic residues predominate over residues 603–743 (TDREEATRLL…AETKKQDGKE (141 aa)).

Belongs to the MAP7 family.

The protein localises to the cytoplasm. It localises to the cytoskeleton. Its subcellular location is the spindle. It is found in the microtubule organizing center. The protein resides in the centrosome. The protein localises to the midbody. In terms of biological role, microtubule-stabilizing protein involved in the control of cell motility and neurite outgrowth. Facilitate microtubule stabilization through the maintenance of acetylated stable microtubules. The chain is MAP7 domain-containing protein 1 (Map7d1) from Rattus norvegicus (Rat).